A 687-amino-acid polypeptide reads, in one-letter code: DNA-directed RNA polymerase subunit beta' (687 aa).

Zn(2+) is bound by residues cysteine 76, cysteine 78, cysteine 94, and cysteine 97. Mg(2+) contacts are provided by aspartate 496, aspartate 498, and aspartate 500.

This sequence belongs to the RNA polymerase beta' chain family. RpoC1 subfamily. As to quaternary structure, in plastids the minimal PEP RNA polymerase catalytic core is composed of four subunits: alpha, beta, beta', and beta''. When a (nuclear-encoded) sigma factor is associated with the core the holoenzyme is formed, which can initiate transcription. The cofactor is Mg(2+). Zn(2+) serves as cofactor.

It localises to the plastid. It is found in the chloroplast. The catalysed reaction is RNA(n) + a ribonucleoside 5'-triphosphate = RNA(n+1) + diphosphate. Its function is as follows. DNA-dependent RNA polymerase catalyzes the transcription of DNA into RNA using the four ribonucleoside triphosphates as substrates. The protein is DNA-directed RNA polymerase subunit beta' of Ipomoea purpurea (Common morning glory).